Here is a 398-residue protein sequence, read N- to C-terminus: Phosphoglycerate kinase (398 aa).

Substrate is bound by residues 24–26, Arg-39, 62–65, Arg-121, and Arg-154; these read DFN and HFGR. Residues Lys-205, Gly-296, Glu-327, and 354-357 each bind ATP; that span reads GGDS.

Belongs to the phosphoglycerate kinase family. As to quaternary structure, monomer.

The protein resides in the cytoplasm. It carries out the reaction (2R)-3-phosphoglycerate + ATP = (2R)-3-phospho-glyceroyl phosphate + ADP. Its pathway is carbohydrate degradation; glycolysis; pyruvate from D-glyceraldehyde 3-phosphate: step 2/5. This chain is Phosphoglycerate kinase, found in Trichodesmium erythraeum (strain IMS101).